The primary structure comprises 452 residues: MQVTETLSEGLKHEFQVSVPAADLDAKADAKLVDLKDKVRINGFRPGKVPVAHLKKIYGKSVMAETIDQTIRDTNTQIFTERGFRLATEPKVTMPTEEAEVEKILSGQSDLTYTVAVEVVPAITLADFKTFSVEKPVADITDADVDEAIKRLADANRSYAAKAEGAKAESGDRVKVNFKGTIDGVAFDGGTGEGIDVVIGSNTFIPGFEDQLIGIGVGETRTLKVAFPKNYLNNDLAGKDAEFETTATAIETPEEKVVDDEFAKTLGLESLDKLKQLMRDRLAGEFNQATRQRVKRALLDRLDETHKFDAPPSLIDEEFNLMWNSVKAEMDSSGKTFADENTTEEKAKEEYRTIADRRVRLGLVLSEIGEKNKITVTDDEVSRAVIERARSMPGREKEVWDFYRSNPQALAQLRAPIYEDKVVDFILELANVTEKKVSKDELFKDDENDKAA.

The PPIase FKBP-type domain occupies 171–256; sequence GDRVKVNFKG…ATAIETPEEK (86 aa).

Belongs to the FKBP-type PPIase family. Tig subfamily.

The protein localises to the cytoplasm. It carries out the reaction [protein]-peptidylproline (omega=180) = [protein]-peptidylproline (omega=0). Functionally, involved in protein export. Acts as a chaperone by maintaining the newly synthesized protein in an open conformation. Functions as a peptidyl-prolyl cis-trans isomerase. This chain is Trigger factor, found in Bradyrhizobium sp. (strain BTAi1 / ATCC BAA-1182).